A 119-amino-acid polypeptide reads, in one-letter code: V-type proton ATPase subunit F (119 aa).

Belongs to the V-ATPase F subunit family. As to quaternary structure, V-ATPase is a heteromultimeric enzyme made up of two complexes: the ATP-hydrolytic V1 complex and the proton translocation V0 complex. The V1 complex consists of three catalytic AB heterodimers that form a heterohexamer, three peripheral stalks each consisting of EG heterodimers, one central rotor including subunits D and F, and the regulatory subunits C and H. The proton translocation complex V0 consists of the proton transport subunit a, a ring of proteolipid subunits c9c'', rotary subunit d, subunits e and f, and the accessory subunits ATP6AP1/Ac45 and ATP6AP2/PRR.

The protein resides in the cytoplasmic vesicle. Its subcellular location is the secretory vesicle. It localises to the synaptic vesicle membrane. It is found in the clathrin-coated vesicle membrane. Functionally, subunit of the V1 complex of vacuolar(H+)-ATPase (V-ATPase), a multisubunit enzyme composed of a peripheral complex (V1) that hydrolyzes ATP and a membrane integral complex (V0) that translocates protons. V-ATPase is responsible for acidifying and maintaining the pH of intracellular compartments and in some cell types, is targeted to the plasma membrane, where it is responsible for acidifying the extracellular environment. The chain is V-type proton ATPase subunit F (Atp6v1f) from Mus musculus (Mouse).